Reading from the N-terminus, the 384-residue chain is Galactokinase (384 aa).

35–38 (EHTD) contacts substrate. ATP-binding positions include Ser-69 and 125 to 131 (GAGLSSS). Positions 131 and 163 each coordinate Mg(2+). Asp-175 serves as the catalytic Proton acceptor. Tyr-224 provides a ligand contact to substrate.

This sequence belongs to the GHMP kinase family. GalK subfamily.

It is found in the cytoplasm. It catalyses the reaction alpha-D-galactose + ATP = alpha-D-galactose 1-phosphate + ADP + H(+). The protein operates within carbohydrate metabolism; galactose metabolism. Catalyzes the transfer of the gamma-phosphate of ATP to D-galactose to form alpha-D-galactose-1-phosphate (Gal-1-P). The chain is Galactokinase from Aliivibrio fischeri (strain ATCC 700601 / ES114) (Vibrio fischeri).